We begin with the raw amino-acid sequence, 358 residues long: Putative cell-type specific agglutination protein pfl7 (358 aa).

The N-terminal stretch at 1–23 (MNSLKSLCLKCIVTLCLLVNAFA) is a signal peptide. N-linked (GlcNAc...) asparagine glycans are attached at residues Asn67, Asn88, Asn112, and Asn136. The disordered stretch occupies residues 90-144 (TISTSSSTPITASVPTSSSILSNSTIPTTSPVPTTSSTPTSSSILSNSTIPSSSS). Repeat copies occupy residues 148 to 180 (STIT…IPTA) and 181 to 218 (GYIT…TPSC). The segment at 148–218 (STITTTIISG…GLVEVITPSC (71 aa)) is 2 X 36 AA approximate tandem repeats. A DIPSY domain is found at 207–358 (QSGLVEVITP…RADDVILVAY (152 aa)). N-linked (GlcNAc...) asparagine glycosylation is found at Asn245 and Asn305.

The protein belongs to the mam3/map4 family.

It is found in the cell surface. Its function is as follows. May be involved in agglutination during conjugation or other aspects of colony formation. Induces flocculation when overexpressed. The chain is Putative cell-type specific agglutination protein pfl7 from Schizosaccharomyces pombe (strain 972 / ATCC 24843) (Fission yeast).